A 1588-amino-acid polypeptide reads, in one-letter code: Ubiquitin carboxyl-terminal hydrolase 54 (1588 aa).

Position 12 is an omega-N-methylarginine (Arg12). A USP domain is found at 31–352 (KGLSNEPGQN…QPLLLLYADP (322 aa)). Residue Cys42 is the Nucleophile of the active site. 12 residues coordinate Zn(2+): His67, Cys69, Cys74, Cys77, His133, Cys145, Cys150, His153, Cys166, Cys169, Cys225, and Cys229. The active-site Proton acceptor is His302. Basic and acidic residues-rich tracts occupy residues 380–391 (DSGHLTDSECNQ) and 424–434 (SEGETLKEKQA). Disordered regions lie at residues 380–447 (DSGH…TSRL) and 459–519 (HSRP…PTWR). Ser424 carries the post-translational modification Phosphoserine. Composition is skewed to polar residues over residues 436-445 (RNASKSSSTS) and 459-471 (HSRP…TNAA). The span at 499–512 (TESTSSEARSSSSS) shows a compositional bias: low complexity. Phosphoserine occurs at positions 574, 613, and 616. Positions 601 to 616 (ESGYESSERNSSSPVS) are enriched in low complexity. Residues 601–620 (ESGYESSERNSSSPVSLDAA) form a disordered region. Positions 678–712 (TSKSELDELQEEVARRAQEQELRKKREKELEAAKG) form a coiled coil. 5 disordered regions span residues 801–839 (RSLQ…EQSV), 856–895 (DSEL…SPPG), 950–969 (EDNS…TTQD), 1093–1172 (TRDV…SRRR), and 1525–1562 (GSVL…SAGE). Positions 808–825 (QQQPPSQQPVQPSASLPS) are enriched in low complexity. Over residues 878-895 (SLVSPSPAQSVSQHSPPG) the composition is skewed to polar residues. Ser1138 carries the post-translational modification Phosphoserine. A compositionally biased stretch (basic and acidic residues) spans 1536-1547 (RRIDVPPDDDGR).

Belongs to the peptidase C19 family.

The catalysed reaction is Thiol-dependent hydrolysis of ester, thioester, amide, peptide and isopeptide bonds formed by the C-terminal Gly of ubiquitin (a 76-residue protein attached to proteins as an intracellular targeting signal).. In terms of biological role, deubiquitinase that specifically mediates 'Lys-63'-linked deubiquitination of substrates with a polyubiquitin chain composed of at least 3 ubiquitins. Specifically recognizes ubiquitin chain in position S2 and catalyzes cleavage of polyubiquitin within 'Lys-63'-linked chains. Not able to deubiquitinate substrates with shorter ubiquitin chains. Mediates deubiquitination of PLK4, maintaining PLK4 stability by reducing its ubiquitination-mediated degradation. In Rattus norvegicus (Rat), this protein is Ubiquitin carboxyl-terminal hydrolase 54 (Usp54).